The sequence spans 418 residues: uncharacterized protein (418 aa).

This is an uncharacterized protein from Ictalurid herpesvirus 1 (strain Auburn) (IcHV-1).